The following is a 298-amino-acid chain: MNALTLPDIAAQASRQALPLDWVGMCGIALPILIDGQRLTATADAGVSLDDGAARGIHMSRLYLALEMLDQQPLTPALLRNVLQRFLDSHEGLSNNAYLRIHTDLLLKRPALVSPLAGWKRYPVSIEARLENQMFHVELKIDVTYSSTCPCSAALARQLIQQQFLDDFGDTSLRHEDVLTWLGSANGIVATPHSQRSSAQLLITLDGDQAGLPINDLIDNVEAALGTAVQTAVKRADEQAFALANGQNLMFCEDAARRLNLALKRSDAVKAFHLKVIHAESLHAHDAVAESRWTRNPA.

The protein belongs to the GTP cyclohydrolase IV family.

It carries out the reaction GTP + H2O = 7,8-dihydroneopterin 3'-triphosphate + formate + H(+). The protein operates within cofactor biosynthesis; 7,8-dihydroneopterin triphosphate biosynthesis; 7,8-dihydroneopterin triphosphate from GTP: step 1/1. Its function is as follows. Converts GTP to 7,8-dihydroneopterin triphosphate. This is GTP cyclohydrolase FolE2 from Pseudomonas fluorescens (strain SBW25).